The primary structure comprises 589 residues: MASEIHMLQPMCLIENTEAHLVINQEALRILSAINQPVVVVAIVGLYRTGKSYLMNKLAGKRTGFSLGSTVQSHTKGIWMWCVPHPKKAGQTLVLLDTEGLEDVEKGDNQNDCWIFALAVLLSSTFVYNSMGTINQQAMDQLHYVTELTDLIKSKSSPDQSGIDDSANFVGFFPTFVWALRDFSLELEVNGKLVTPDEYLEHSLTLKKGADKKTKSFNEPRLCIRKFFPKRKCFIFDRPALRKQLCKLETLGEEELCSEFVEQVAEFTSYIFSYSAVKTLSGGIIVNGPRLKSLVQTYVGAISSGSLPCMESAVLTLAQIENSAAVQKAITHYEEQMNQKIQMPTETLQELLDLHRLIEREAIEIFLKNSFKDVDQKFQTELGNLLISKRDAFIKKNSDVSSAHCSDLIEDIFGPLEEEVKQGTFSKPGGYFLFLQMRQELEKKYNQAPGKGLEAEAVLKKYFESKEDIVETLLKTDQSLTEAAKEIEVERIKAETAEAANRELAEKQEKFELMMQQKEESYQEHVRQLTEKMKEEQKKLIEEQDNIIALKLREQEKFLREGYENESKKLLREIENMKRRQSPGKCTIL.

A GTPase domain (Globular) region spans residues 1–309 (MASEIHMLQP…GAISSGSLPC (309 aa)). The region spanning 35–276 (NQPVVVVAIV…FTSYIFSYSA (242 aa)) is the GB1/RHD3-type G domain. GTP-binding positions include 45 to 52 (GLYRTGKS), 181 to 182 (RD), and Leu-245. A Cysteine methyl ester modification is found at Cys-586. Cys-586 is lipidated: S-geranylgeranyl cysteine. Residues 587–589 (TIL) constitute a propeptide, removed in mature form.

This sequence belongs to the TRAFAC class dynamin-like GTPase superfamily. GB1/RHD3 GTPase family. GB1 subfamily. In terms of assembly, homodimer; homodimerization occurs upon GTP-binding and is required for the association with membranous structures. Heterodimer with other family members, including GBP1, GBP3, GBP4 and GBP5. In terms of processing, isoprenylation is required for proper subcellular location. In terms of tissue distribution, widely expressed.

It is found in the cytoplasmic vesicle membrane. The protein resides in the golgi apparatus membrane. The protein localises to the cytoplasm. Its subcellular location is the perinuclear region. It carries out the reaction GTP + H2O = GDP + phosphate + H(+). Interferon (IFN)-inducible GTPase that plays important roles in innate immunity against a diverse range of bacterial, viral and protozoan pathogens. Hydrolyzes GTP to GMP in 2 consecutive cleavage reactions, but the major reaction product is GDP. Following infection, recruited to the pathogen-containing vacuoles or vacuole-escaped bacteria and acts as a positive regulator of inflammasome assembly by promoting the release of inflammasome ligands from bacteria. Acts by promoting lysis of pathogen-containing vacuoles, releasing pathogens into the cytosol. Following pathogen release in the cytosol, promotes recruitment of proteins that mediate bacterial cytolysis: this liberates ligands that are detected by inflammasomes, such as lipopolysaccharide (LPS) that activates the non-canonical CASP4/CASP11 inflammasome or double-stranded DNA (dsDNA) that activates the AIM2 inflammasome. Confers protection to the protozoan pathogen Toxoplasma gondii. Independently of its GTPase activity, acts as an inhibitor of various viruses infectivity by inhibiting FURIN-mediated maturation of viral envelope proteins. The protein is Guanylate-binding protein 2 (Gbp2) of Rattus norvegicus (Rat).